The primary structure comprises 511 residues: ATP synthase subunit alpha (511 aa).

169–176 is an ATP binding site; that stretch reads GDRQTGKT.

This sequence belongs to the ATPase alpha/beta chains family. F-type ATPases have 2 components, CF(1) - the catalytic core - and CF(0) - the membrane proton channel. CF(1) has five subunits: alpha(3), beta(3), gamma(1), delta(1), epsilon(1). CF(0) has three main subunits: a(1), b(2) and c(9-12). The alpha and beta chains form an alternating ring which encloses part of the gamma chain. CF(1) is attached to CF(0) by a central stalk formed by the gamma and epsilon chains, while a peripheral stalk is formed by the delta and b chains.

The protein resides in the cell inner membrane. It carries out the reaction ATP + H2O + 4 H(+)(in) = ADP + phosphate + 5 H(+)(out). Produces ATP from ADP in the presence of a proton gradient across the membrane. The alpha chain is a regulatory subunit. This chain is ATP synthase subunit alpha, found in Bartonella quintana (strain Toulouse) (Rochalimaea quintana).